We begin with the raw amino-acid sequence, 407 residues long: Cation efflux system protein CusB (407 aa).

The first 28 residues, Met1 to Ala28, serve as a signal peptide directing secretion.

The protein belongs to the membrane fusion protein (MFP) (TC 8.A.1) family. The cus efflux system is composed of CusA, CusB, CusC and CusF.

In terms of biological role, part of a cation efflux system that mediates resistance to copper and silver. In Escherichia coli (strain K12), this protein is Cation efflux system protein CusB (cusB).